We begin with the raw amino-acid sequence, 164 residues long: Small ribosomal subunit protein uS5 (164 aa).

One can recognise an S5 DRBM domain in the interval 10-73; it reads LEERVVAVNR…DDAKKNLIEV (64 aa).

This sequence belongs to the universal ribosomal protein uS5 family. In terms of assembly, part of the 30S ribosomal subunit. Contacts proteins S4 and S8.

With S4 and S12 plays an important role in translational accuracy. Its function is as follows. Located at the back of the 30S subunit body where it stabilizes the conformation of the head with respect to the body. The sequence is that of Small ribosomal subunit protein uS5 from Streptococcus pneumoniae serotype 2 (strain D39 / NCTC 7466).